Consider the following 877-residue polypeptide: MKLTLLIGILLIGIGVVLNTRQQWVTVFYGVPVWKNSSVQAFCMTPTTRLWATTNSIPDDHDYTEVPLNITEPFEAWADRNPLVAQAGSNIHLLFEQTLKPCVKLSPLCIKMSCVELNSSEPTTTPKSTTASTTNITASTTTLPCVQNKTSTVLESCNETIIEKELNEEPASNCTFAMAGYVRDQKKKYSVVWNDAEIMCKKGNNSNRECYMIHCNDSVIKEACDKTYWDELRLRYCAPAGFALLKCNDYDYAGFKTNCSNVSVVHCTNLINTTVTTGLLLNGSYSENRTQIWQKHRVSNDSVLVLFNKHYNLTVTCKRPGNKTVLPVTIMAGLVFHSQRYNTRLRQAWCHFQGNWRGAWKEVKNEIVKLPKDRYQGTNDTEEIYLQRLFGDPEAANLWFNCQGEFFYCKMDWFLNYLNNRTVDPDHNPCNGTKGKGKAPGPCAQRTYVACHIRSVINDWYTLSRKTYAPPREGHLQCTSTVTGMSVELNYNSKNRTNVTLSPQIETIWAAELGRYKLVEITPIGFAPTEVRRYTGGHDRTKRVPFVLGFLGFLGAAGTAMGAAATALTVQSQHLLAGILQQQKNLLAAVEAQQQMLKLTIWGVKNLNARVTALEKYLEDQARLNAWGCAWKQVCHTTVPWQWNNRTPDWNNMTWLEWERQISYLEGNITTQLEEARAQEEKNLDAYQKLSSWSDFWSWFDFSKWLNILKIGFLDVLGIIGLRLLYTVYSCIARVRQGYSPLSPQIHIHPWKGQPDNAEGPGEGGDKRKNSSEPWQKESGTAEWKSNWCKRLTNWCSISSIWLYNSCLTLLVHLRSAFQYIQYGLGELKAAAQEAVVALARLAQNAGYQIWLACRSAYRAIINSPRRVRQGLEGILN.

Residues 1 to 19 form the signal peptide; it reads MKLTLLIGILLIGIGVVLN. Topologically, residues 20–707 are extracellular; that stretch reads TRQQWVTVFY…SWFDFSKWLN (688 aa). 22 N-linked (GlcNAc...) asparagine; by host glycosylation sites follow: N36, N69, N118, N135, N148, N158, N173, N204, N216, N258, N261, N272, N282, N288, N300, N312, N322, N379, N420, N431, N495, and N498. 5 disulfides stabilise this stretch: C102/C224, C109/C215, C114/C174, C237/C267, and C247/C259. The interval 114–173 is V1; the sequence is CVELNSSEPTTTPKSTTASTTNITASTTTLPCVQNKTSTVLESCNETIIEKELNEEPASN. Residues 174–215 are V2; it reads CTFAMAGYVRDQKKKYSVVWNDAEIMCKKGNNSNRECYMIHC. The V3 stretch occupies residues 317 to 349; it reads CKRPGNKTVLPVTIMAGLVFHSQRYNTRLRQAW. Cysteines 317 and 350 form a disulfide. Cystine bridges form between C402–C478 and C409–C451. Residues 409-451 form a V4 region; sequence CKMDWFLNYLNNRTVDPDHNPCNGTKGKGKAPGPCAQRTYVAC. The interval 494-501 is V5; that stretch reads KNRTNVTL. The segment at 544 to 564 is fusion peptide; that stretch reads VPFVLGFLGFLGAAGTAMGAA. The interval 607–623 is immunosuppression; that stretch reads LNARVTALEKYLEDQAR. Residues N652 and N668 are each glycosylated (N-linked (GlcNAc...) asparagine; by host). Residues 668 to 692 adopt a coiled-coil conformation; the sequence is NITTQLEEARAQEEKNLDAYQKLSS. The MPER; binding to GalCer stretch occupies residues 689–710; the sequence is KLSSWSDFWSWFDFSKWLNILK. A helical membrane pass occupies residues 708 to 728; sequence ILKIGFLDVLGIIGLRLLYTV. At 729-877 the chain is on the cytoplasmic side; the sequence is YSCIARVRQG…VRQGLEGILN (149 aa). The short motif at 739-742 is the YXXL motif; contains endocytosis signal element; the sequence is YSPL. The segment at 751–779 is disordered; that stretch reads WKGQPDNAEGPGEGGDKRKNSSEPWQKES.

As to quaternary structure, the mature envelope protein (Env) consists of a homotrimer of non-covalently associated gp120-gp41 heterodimers. The resulting complex protrudes from the virus surface as a spike. Interacts with host CD4 and CCR5. Gp120 also interacts with the C-type lectins CD209/DC-SIGN and CLEC4M/DC-SIGNR (collectively referred to as DC-SIGN(R)). The mature envelope protein (Env) consists of a homotrimer of non-covalently associated gp120-gp41 heterodimers. The resulting complex protrudes from the virus surface as a spike. In terms of processing, specific enzymatic cleavages in vivo yield mature proteins. Envelope glycoproteins are synthesized as an inactive precursor that is heavily N-glycosylated and processed likely by host cell furin in the Golgi to yield the mature SU and TM proteins. The cleavage site between SU and TM requires the minimal sequence [KR]-X-[KR]-R.

It localises to the virion membrane. Its subcellular location is the host cell membrane. It is found in the host endosome membrane. Functionally, the surface protein gp120 (SU) attaches the virus to the host lymphoid cell by binding to the primary receptor CD4. This interaction induces a structural rearrangement creating a high affinity binding site for a chemokine coreceptor like CCR5. This peculiar 2 stage receptor-interaction strategy allows gp120 to maintain the highly conserved coreceptor-binding site in a cryptic conformation, protected from neutralizing antibodies. These changes are transmitted to the transmembrane protein gp41 and are thought to activate its fusogenic potential by unmasking its fusion peptide. Surface protein gp120 (SU) may target the virus to gut-associated lymphoid tissue (GALT) by binding host ITGA4/ITGB7 (alpha-4/beta-7 integrins), a complex that mediates T-cell migration to the GALT. Interaction between gp120 and ITGA4/ITGB7 would allow the virus to enter GALT early in the infection, infecting and killing most of GALT's resting CD4+ T-cells. This T-cell depletion is believed to be the major insult to the host immune system leading to AIDS. Its function is as follows. The surface protein gp120 is a ligand for CD209/DC-SIGN and CLEC4M/DC-SIGNR, which are respectively found on dendritic cells (DCs), and on endothelial cells of liver sinusoids and lymph node sinuses. These interactions allow capture of viral particles at mucosal surfaces by these cells and subsequent transmission to permissive cells. DCs are professional antigen presenting cells, critical for host immunity by inducing specific immune responses against a broad variety of pathogens. They act as sentinels in various tissues where they take up antigen, process it, and present it to T-cells following migration to lymphoid organs. SIV subverts the migration properties of dendritic cells to gain access to CD4+ T-cells in lymph nodes. Virus transmission to permissive T-cells occurs either in trans (without DCs infection, through viral capture and transmission), or in cis (following DCs productive infection, through the usual CD4-gp120 interaction), thereby inducing a robust infection. In trans infection, bound virions remain infectious over days and it is proposed that they are not degraded, but protected in non-lysosomal acidic organelles within the DCs close to the cell membrane thus contributing to the viral infectious potential during DCs' migration from the periphery to the lymphoid tissues. On arrival at lymphoid tissues, intact virions recycle back to DCs' cell surface allowing virus transmission to CD4+ T-cells. Virion capture also seems to lead to MHC-II-restricted viral antigen presentation, and probably to the activation of SIV-specific CD4+ cells. In terms of biological role, the transmembrane protein gp41 (TM) acts as a class I viral fusion protein. Under the current model, the protein has at least 3 conformational states: pre-fusion native state, pre-hairpin intermediate state, and post-fusion hairpin state. During fusion of viral and target intracellular membranes, the coiled coil regions (heptad repeats) assume a trimer-of-hairpins structure, positioning the fusion peptide in close proximity to the C-terminal region of the ectodomain. The formation of this structure appears to drive apposition and subsequent fusion of viral and target cell membranes. Complete fusion occurs in host cell endosomes. The virus undergoes clathrin-dependent internalization long before endosomal fusion, thus minimizing the surface exposure of conserved viral epitopes during fusion and reducing the efficacy of inhibitors targeting these epitopes. Membranes fusion leads to delivery of the nucleocapsid into the cytoplasm. Functionally, the envelope glycoprotein gp160 precursor down-modulates cell surface CD4 antigen by interacting with it in the endoplasmic reticulum and blocking its transport to the cell surface. The gp120-gp41 heterodimer allows rapid transcytosis of the virus through CD4 negative cells such as simple epithelial monolayers of the intestinal, rectal and endocervical epithelial barriers. Both gp120 and gp41 specifically recognize glycosphingolipids galactosyl-ceramide (GalCer) or 3' sulfo-galactosyl-ceramide (GalS) present in the lipid rafts structures of epithelial cells. Binding to these alternative receptors allows the rapid transcytosis of the virus through the epithelial cells. This transcytotic vesicle-mediated transport of virions from the apical side to the basolateral side of the epithelial cells does not involve infection of the cells themselves. The polypeptide is Envelope glycoprotein gp160 (env) (Cercopithecidae (Old World monkeys)).